The following is a 239-amino-acid chain: TPR repeat-containing protein TP_0282 (239 aa).

A helical membrane pass occupies residues 21–43 (LLVGVLVAILGGLGLSAGCLLVM). 2 TPR repeats span residues 112–145 (AYAQ…ARRS) and 149–182 (GVYY…QDFP).

The protein localises to the cell membrane. The chain is TPR repeat-containing protein TP_0282 from Treponema pallidum (strain Nichols).